Reading from the N-terminus, the 541-residue chain is Catalase (541 aa).

The tract at residues 1 to 20 (MPQTKGKPHEEQLEQYKNSQ) is disordered. Residues H74 and N147 contribute to the active site. Heme is bound at residue Y357.

The protein belongs to the catalase family. Requires heme as cofactor.

It is found in the peroxisome matrix. It carries out the reaction 2 H2O2 = O2 + 2 H2O. In terms of biological role, catalyzes the degradation of hydrogen peroxide (H(2)O(2)) generated by peroxisomal oxidases to water and oxygen, thereby protecting cells from the toxic effects of hydrogen peroxide. The chain is Catalase (CAT) from Ascaris suum (Pig roundworm).